We begin with the raw amino-acid sequence, 273 residues long: Pantothenate synthetase (273 aa).

27–34 (MGALHQGH) lines the ATP pocket. The Proton donor role is filled by H34. Q58 provides a ligand contact to (R)-pantoate. Residue Q58 participates in beta-alanine binding. ATP is bound at residue 144–147 (GKKD). Q150 contacts (R)-pantoate. Residues V173 and 181–184 (LSSR) each bind ATP.

This sequence belongs to the pantothenate synthetase family. Homodimer.

Its subcellular location is the cytoplasm. The enzyme catalyses (R)-pantoate + beta-alanine + ATP = (R)-pantothenate + AMP + diphosphate + H(+). The protein operates within cofactor biosynthesis; (R)-pantothenate biosynthesis; (R)-pantothenate from (R)-pantoate and beta-alanine: step 1/1. Its function is as follows. Catalyzes the condensation of pantoate with beta-alanine in an ATP-dependent reaction via a pantoyl-adenylate intermediate. This chain is Pantothenate synthetase, found in Nitratiruptor sp. (strain SB155-2).